We begin with the raw amino-acid sequence, 418 residues long: Probable cysteine desulfurase (418 aa).

An N6-(pyridoxal phosphate)lysine modification is found at K236. The Cysteine persulfide intermediate role is filled by C376.

It belongs to the class-V pyridoxal-phosphate-dependent aminotransferase family. Csd subfamily. Pyridoxal 5'-phosphate serves as cofactor.

The enzyme catalyses (sulfur carrier)-H + L-cysteine = (sulfur carrier)-SH + L-alanine. Functionally, catalyzes the removal of elemental sulfur and selenium atoms from L-cysteine, L-cystine, L-selenocysteine, and L-selenocystine to produce L-alanine. This is Probable cysteine desulfurase (csd) from Streptomyces coelicolor (strain ATCC BAA-471 / A3(2) / M145).